Consider the following 233-residue polypeptide: Antiholin-like protein LrgB (233 aa).

Helical transmembrane passes span 7 to 27 (INTP…ATFL), 33 to 53 (GFFL…FLKL), 63 to 83 (IGGD…AIPL), 97 to 117 (ILGG…LIAE), 124 to 144 (GIIA…PVSA), 152 to 172 (LTSL…SKLI), and 212 to 232 (ISLV…ATLL).

This sequence belongs to the CidB/LrgB family. LrgB subfamily.

The protein localises to the cell membrane. Its function is as follows. Inhibits the expression or activity of extracellular murein hydrolases by interacting, possibly with LrgA, with the holin-like proteins CidA and/or CidB. The LrgAB and CidAB proteins may affect the proton motive force of the membrane. May be involved in programmed cell death (PCD), possibly triggering PCD in response to antibiotics and environmental stresses. The chain is Antiholin-like protein LrgB from Staphylococcus saprophyticus subsp. saprophyticus (strain ATCC 15305 / DSM 20229 / NCIMB 8711 / NCTC 7292 / S-41).